Reading from the N-terminus, the 224-residue chain is Proteasome subunit beta (224 aa).

Residues 1-6 constitute a propeptide, removed in mature form; by autocatalysis; the sequence is MDVMKG. Thr7 functions as the Nucleophile in the catalytic mechanism.

This sequence belongs to the peptidase T1B family. As to quaternary structure, the 20S proteasome core is composed of 14 alpha and 14 beta subunits that assemble into four stacked heptameric rings, resulting in a barrel-shaped structure. The two inner rings, each composed of seven catalytic beta subunits, are sandwiched by two outer rings, each composed of seven alpha subunits. The catalytic chamber with the active sites is on the inside of the barrel. Has a gated structure, the ends of the cylinder being occluded by the N-termini of the alpha-subunits. Is capped at one or both ends by the proteasome regulatory ATPase, PAN.

It is found in the cytoplasm. It catalyses the reaction Cleavage of peptide bonds with very broad specificity.. Its activity is regulated as follows. The formation of the proteasomal ATPase PAN-20S proteasome complex, via the docking of the C-termini of PAN into the intersubunit pockets in the alpha-rings, triggers opening of the gate for substrate entry. Interconversion between the open-gate and close-gate conformations leads to a dynamic regulation of the 20S proteasome proteolysis activity. In terms of biological role, component of the proteasome core, a large protease complex with broad specificity involved in protein degradation. The M.jannaschii proteasome is able to cleave oligopeptides after Glu, Asp, Tyr, Phe, Trp, slightly after Arg, but not after Ala. Thus, displays caspase-like and chymotrypsin-like activities and low level of trypsin-like activity. This Methanocaldococcus jannaschii (strain ATCC 43067 / DSM 2661 / JAL-1 / JCM 10045 / NBRC 100440) (Methanococcus jannaschii) protein is Proteasome subunit beta.